The chain runs to 305 residues: Glycine--tRNA ligase alpha subunit (305 aa).

The protein belongs to the class-II aminoacyl-tRNA synthetase family. In terms of assembly, tetramer of two alpha and two beta subunits.

It localises to the cytoplasm. The enzyme catalyses tRNA(Gly) + glycine + ATP = glycyl-tRNA(Gly) + AMP + diphosphate. This is Glycine--tRNA ligase alpha subunit from Streptococcus pyogenes serotype M2 (strain MGAS10270).